The following is a 296-amino-acid chain: Phosphoribosylaminoimidazole-succinocarboxamide synthase (296 aa).

Belongs to the SAICAR synthetase family.

It catalyses the reaction 5-amino-1-(5-phospho-D-ribosyl)imidazole-4-carboxylate + L-aspartate + ATP = (2S)-2-[5-amino-1-(5-phospho-beta-D-ribosyl)imidazole-4-carboxamido]succinate + ADP + phosphate + 2 H(+). It functions in the pathway purine metabolism; IMP biosynthesis via de novo pathway; 5-amino-1-(5-phospho-D-ribosyl)imidazole-4-carboxamide from 5-amino-1-(5-phospho-D-ribosyl)imidazole-4-carboxylate: step 1/2. The protein is Phosphoribosylaminoimidazole-succinocarboxamide synthase of Trichlorobacter lovleyi (strain ATCC BAA-1151 / DSM 17278 / SZ) (Geobacter lovleyi).